Consider the following 113-residue polypeptide: TYRO protein tyrosine kinase-binding protein (113 aa).

Residues 1–27 form the signal peptide; sequence MGGLEPCSRLLLLPLLLAVGGLRPVQA. Topologically, residues 28–40 are extracellular; it reads QAQSDCSCSTVSP. A helical transmembrane segment spans residues 41-61; the sequence is GVLAGIVMGDLVLTVLIALAV. Residue Asp50 coordinates Ca(2+). Over 62 to 113 the chain is Cytoplasmic; that stretch reads YFLGRLVHRGRGAAEAATRKQRITETESPYQELQGQRSDVYSDLNMQRPYYK. The segment at 75–113 is disordered; that stretch reads AEAATRKQRITETESPYQELQGQRSDVYSDLNMQRPYYK. Residues 80–108 form the ITAM domain; that stretch reads RKQRITETESPYQELQGQRSDVYSDLNMQ. The span at 87 to 100 shows a compositional bias: polar residues; the sequence is TESPYQELQGQRSD. A phosphotyrosine mark is found at Tyr91 and Tyr102.

Belongs to the TYROBP family. As to quaternary structure, homodimer; disulfide-linked. Homotrimer; disulfide-linked. Homotetramer; disulfide-linked. Homotrimers and homotetramers form when low levels of partner receptors are available and is competitive with assembly with interacting receptors. They may represent alternative oligomerization states or may be intermediates in the receptor assembly process. Binding of a metal cation aids in homooligomerization through coordination of the metal ion by the subunits of the oligomer. Interacts with TREM1. Interacts with TREM2. Interacts with CLECSF5. Interacts with CD300LB and CD300C2. Interacts with CD300E. Interacts (via ITAM domain) with SYK (via SH2 domains); activates SYK mediating neutrophils and macrophages integrin-mediated activation. Interacts with KLRC2. Interacts with CD300H. Interacts with KLRD1. Interacts with SIGLEC1. In terms of processing, following ligand binding by associated receptors, tyrosine phosphorylated in the ITAM domain which leads to activation of additional tyrosine kinases and subsequent cell activation.

The protein resides in the cell membrane. In terms of biological role, adapter protein which non-covalently associates with activating receptors found on the surface of a variety of immune cells to mediate signaling and cell activation following ligand binding by the receptors. TYROBP is tyrosine-phosphorylated in the ITAM domain following ligand binding by the associated receptors which leads to activation of additional tyrosine kinases and subsequent cell activation. Also has an inhibitory role in some cells. Non-covalently associates with activating receptors of the CD300 family to mediate cell activation. Also mediates cell activation through association with activating receptors of the CD200R family. Required for neutrophil activation mediated by integrin. Required for the activation of myeloid cells mediated by the CLEC5A/MDL1 receptor. Associates with natural killer (NK) cell receptors such as the KLRD1/KLRC2 heterodimer to mediate NK cell activation. Associates with TREM1 to mediate activation of neutrophils and monocytes. Associates with TREM2 on monocyte-derived dendritic cells to mediate up-regulation of chemokine receptor CCR7 and dendritic cell maturation and survival. Association with TREM2 mediates cytokine-induced formation of multinucleated giant cells which are formed by the fusion of macrophages. Stabilizes the TREM2 C-terminal fragment (TREM2-CTF) produced by TREM2 ectodomain shedding which suppresses the release of pro-inflammatory cytokines. In microglia, required with TREM2 for phagocytosis of apoptotic neurons. Required with ITGAM/CD11B in microglia to control production of microglial superoxide ions which promote the neuronal apoptosis that occurs during brain development. Promotes pro-inflammatory responses in microglia following nerve injury which accelerates degeneration of injured neurons. Positively regulates the expression of the IRAK3/IRAK-M kinase and IL10 production by liver dendritic cells and inhibits their T cell allosimulatory ability. Negatively regulates B cell proliferation. Required for CSF1-mediated osteoclast cytoskeletal organization. Positively regulates multinucleation during osteoclast development. This Pan troglodytes (Chimpanzee) protein is TYRO protein tyrosine kinase-binding protein.